The sequence spans 472 residues: Divalent metal cation transporter MntH (472 aa).

11 consecutive transmembrane segments (helical) span residues 59–79 (LLAF…PGNW), 92–112 (MLLS…ALAA), 144–164 (LAII…LNLL), 167–187 (VPII…LLLM), 196–216 (AFVI…IVLA), 233–253 (VVAD…TVMP), 288–308 (LALM…AAVF), 325–345 (LLAP…ALLA), 377–397 (VLTR…YGEQ), 402–422 (LLLL…IPLL), and 439–459 (WLMV…VKLL).

The protein belongs to the NRAMP family.

Its subcellular location is the cell inner membrane. In terms of biological role, h(+)-stimulated, divalent metal cation uptake system. The sequence is that of Divalent metal cation transporter MntH from Xylella fastidiosa (strain Temecula1 / ATCC 700964).